The sequence spans 346 residues: Methionine import ATP-binding protein MetN 1 (346 aa).

Residues 2 to 241 (IELKNVSKVF…PQHVTTKKFV (240 aa)) enclose the ABC transporter domain. 38–45 (GYSGAGKS) lines the ATP pocket.

It belongs to the ABC transporter superfamily. Methionine importer (TC 3.A.1.24) family. The complex is composed of two ATP-binding proteins (MetN), two transmembrane proteins (MetI) and a solute-binding protein (MetQ).

It localises to the cell membrane. The enzyme catalyses L-methionine(out) + ATP + H2O = L-methionine(in) + ADP + phosphate + H(+). The catalysed reaction is D-methionine(out) + ATP + H2O = D-methionine(in) + ADP + phosphate + H(+). Part of the ABC transporter complex MetNIQ involved in methionine import. Responsible for energy coupling to the transport system. In Bacillus cereus (strain ATCC 14579 / DSM 31 / CCUG 7414 / JCM 2152 / NBRC 15305 / NCIMB 9373 / NCTC 2599 / NRRL B-3711), this protein is Methionine import ATP-binding protein MetN 1.